Consider the following 257-residue polypeptide: L-aspartate dehydrogenase (257 aa).

The NAD(+) site is built by A124 and N180. H208 is a catalytic residue.

The protein belongs to the L-aspartate dehydrogenase family.

The enzyme catalyses L-aspartate + NADP(+) + H2O = oxaloacetate + NH4(+) + NADPH + H(+). It carries out the reaction L-aspartate + NAD(+) + H2O = oxaloacetate + NH4(+) + NADH + H(+). Its pathway is cofactor biosynthesis; NAD(+) biosynthesis; iminoaspartate from L-aspartate (dehydrogenase route): step 1/1. Specifically catalyzes the NAD or NADP-dependent dehydrogenation of L-aspartate to iminoaspartate. This chain is L-aspartate dehydrogenase, found in Methanothermobacter thermautotrophicus (strain ATCC 29096 / DSM 1053 / JCM 10044 / NBRC 100330 / Delta H) (Methanobacterium thermoautotrophicum).